The sequence spans 428 residues: GTPase Obg (428 aa).

One can recognise an Obg domain in the interval 1 to 158 (MFVDQVKIYV…RYIVLELKVL (158 aa)). Positions 118–143 (KGGRGGRGNTRFATPANPAPQLSENG) are disordered. The 171-residue stretch at 159–329 (ADVGLVGFPS…LLFEIADRLE (171 aa)) folds into the OBG-type G domain. GTP contacts are provided by residues 165–172 (GFPSVGKS), 190–194 (FTTLN), 212–215 (DLPG), 282–285 (NKMD), and 310–312 (SAV). 2 residues coordinate Mg(2+): Ser172 and Thr192. One can recognise an OCT domain in the interval 350–428 (KLEDEEAPFE…LLEFEFEFID (79 aa)).

The protein belongs to the TRAFAC class OBG-HflX-like GTPase superfamily. OBG GTPase family. As to quaternary structure, monomer. The cofactor is Mg(2+).

It is found in the cytoplasm. An essential GTPase which binds GTP, GDP and possibly (p)ppGpp with moderate affinity, with high nucleotide exchange rates and a fairly low GTP hydrolysis rate. Plays a role in control of the cell cycle, stress response, ribosome biogenesis and in those bacteria that undergo differentiation, in morphogenesis control. This Bacillus licheniformis (strain ATCC 14580 / DSM 13 / JCM 2505 / CCUG 7422 / NBRC 12200 / NCIMB 9375 / NCTC 10341 / NRRL NRS-1264 / Gibson 46) protein is GTPase Obg.